We begin with the raw amino-acid sequence, 314 residues long: GTPase-interacting component 1 (314 aa).

Disordered stretches follow at residues 112–156, 199–221, and 241–261; these read SRRH…KHDV, TMDSHHDGNETNNTPNGNKQLDS, and LGDSVSEKTNPSSPSVSSFSG. The CRIB domain maps to 126 to 139; that stretch reads ISTPFDFHHISHAN. Positions 140–156 are enriched in basic and acidic residues; sequence GKREDNPLESHEEKHDV. The segment covering 208–221 has biased composition (polar residues); that stretch reads ETNNTPNGNKQLDS. The segment covering 251–260 has biased composition (low complexity); sequence PSSPSVSSFS.

Belongs to the BORG/CEP family. In terms of assembly, interacts with GTP-bound CDC42.

Its subcellular location is the bud neck. It localises to the bud tip. The protein resides in the cytoplasm. The protein localises to the cell cortex. It is found in the cytoskeleton. Functionally, required for cell size and shape control, bud site selection, bud emergence, actin cytoskeletal organization, mitotic spindle orientation/positioning, and mating projection formation in response to mating pheromone. The sequence is that of GTPase-interacting component 1 (GIC1) from Saccharomyces cerevisiae (strain ATCC 204508 / S288c) (Baker's yeast).